Reading from the N-terminus, the 898-residue chain is Alanine--tRNA ligase (898 aa).

Positions 582, 586, 685, and 689 each coordinate Zn(2+).

This sequence belongs to the class-II aminoacyl-tRNA synthetase family. It depends on Zn(2+) as a cofactor.

It is found in the cytoplasm. It carries out the reaction tRNA(Ala) + L-alanine + ATP = L-alanyl-tRNA(Ala) + AMP + diphosphate. In terms of biological role, catalyzes the attachment of alanine to tRNA(Ala) in a two-step reaction: alanine is first activated by ATP to form Ala-AMP and then transferred to the acceptor end of tRNA(Ala). Also edits incorrectly charged Ser-tRNA(Ala) and Gly-tRNA(Ala) via its editing domain. In Mycolicibacterium gilvum (strain PYR-GCK) (Mycobacterium gilvum (strain PYR-GCK)), this protein is Alanine--tRNA ligase.